We begin with the raw amino-acid sequence, 294 residues long: Beta-glucoside kinase (294 aa).

5–11 (AFDIGGT) is an ATP binding site.

This sequence belongs to the ROK (NagC/XylR) family.

The enzyme catalyses D-cellobiose + ATP = 6-phospho-beta-D-glucosyl-(1-&gt;4)-D-glucose + ADP + H(+). Catalyzes the ATP-dependent phosphorylation of cellobiose to produce cellobiose-6'-P. May have a dual role of kinase and transcriptional regulator of the cellobiose-PTS operon. The chain is Beta-glucoside kinase (bglK) from Listeria innocua serovar 6a (strain ATCC BAA-680 / CLIP 11262).